Here is a 638-residue protein sequence, read N- to C-terminus: Threonine--tRNA ligase (638 aa).

The 62-residue stretch at 1-62 (MYQLTLPDKS…EKNSNIEVLT (62 aa)) folds into the TGS domain. A catalytic region spans residues 246–537 (DHRKIGKEMD…LIEHYEGKFP (292 aa)). Positions 337, 388, and 514 each coordinate Zn(2+).

Belongs to the class-II aminoacyl-tRNA synthetase family. Homodimer. Requires Zn(2+) as cofactor.

It is found in the cytoplasm. The catalysed reaction is tRNA(Thr) + L-threonine + ATP = L-threonyl-tRNA(Thr) + AMP + diphosphate + H(+). Catalyzes the attachment of threonine to tRNA(Thr) in a two-step reaction: L-threonine is first activated by ATP to form Thr-AMP and then transferred to the acceptor end of tRNA(Thr). Also edits incorrectly charged L-seryl-tRNA(Thr). In Leptospira interrogans serogroup Icterohaemorrhagiae serovar copenhageni (strain Fiocruz L1-130), this protein is Threonine--tRNA ligase.